Here is a 114-residue protein sequence, read N- to C-terminus: Dolichyl-diphosphooligosaccharide--protein glycosyltransferase subunit DAD2 (114 aa).

Over 1-30 (MPKAAGDAKLLIQSLNKAYAATPTNLKIID) the chain is Cytoplasmic. Residues 31–51 (LYVVFAVATALVQVVYMGIVG) traverse the membrane as a helical segment. Residues 52–54 (SFP) are Lumenal-facing. The helical transmembrane segment at 55-75 (FNSFLSGVLSSIGTAVLGVCL) threads the bilayer. The Cytoplasmic portion of the chain corresponds to 76-93 (RIQVNKDNKEFKDLPPER). Residues 94–114 (AFADFVLCNLVLHLVIMNFLG) form a helical membrane-spanning segment.

It belongs to the DAD/OST2 family. In terms of assembly, component of the oligosaccharyltransferase (OST) complex.

It is found in the endoplasmic reticulum membrane. Its pathway is protein modification; protein glycosylation. Its function is as follows. Subunit of the oligosaccharyl transferase (OST) complex that catalyzes the initial transfer of a defined glycan (Glc(3)Man(9)GlcNAc(2) in eukaryotes) from the lipid carrier dolichol-pyrophosphate to an asparagine residue within an Asn-X-Ser/Thr consensus motif in nascent polypeptide chains, the first step in protein N-glycosylation. N-glycosylation occurs cotranslationally and the complex associates with the Sec61 complex at the channel-forming translocon complex that mediates protein translocation across the endoplasmic reticulum (ER). All subunits are required for a maximal enzyme activity. This Hordeum vulgare (Barley) protein is Dolichyl-diphosphooligosaccharide--protein glycosyltransferase subunit DAD2 (DAD2).